The chain runs to 504 residues: Maturase K (504 aa).

The protein belongs to the intron maturase 2 family. MatK subfamily.

The protein localises to the plastid. The protein resides in the chloroplast. Usually encoded in the trnK tRNA gene intron. Probably assists in splicing its own and other chloroplast group II introns. The polypeptide is Maturase K (Thlaspi arvense (Field penny-cress)).